The primary structure comprises 144 residues: Small ribosomal subunit protein eS12 (144 aa).

It belongs to the eukaryotic ribosomal protein eS12 family.

The sequence is that of Small ribosomal subunit protein eS12 (RPS12) from Trypanosoma brucei brucei.